The following is a 273-amino-acid chain: Formamidopyrimidine-DNA glycosylase (273 aa).

The Schiff-base intermediate with DNA role is filled by P2. E3 (proton donor) is an active-site residue. K59 serves as the catalytic Proton donor; for beta-elimination activity. 3 residues coordinate DNA: H93, R111, and R154. The FPG-type zinc-finger motif lies at K239 to V273. R263 functions as the Proton donor; for delta-elimination activity in the catalytic mechanism.

The protein belongs to the FPG family. In terms of assembly, monomer. The cofactor is Zn(2+).

It carries out the reaction Hydrolysis of DNA containing ring-opened 7-methylguanine residues, releasing 2,6-diamino-4-hydroxy-5-(N-methyl)formamidopyrimidine.. It catalyses the reaction 2'-deoxyribonucleotide-(2'-deoxyribose 5'-phosphate)-2'-deoxyribonucleotide-DNA = a 3'-end 2'-deoxyribonucleotide-(2,3-dehydro-2,3-deoxyribose 5'-phosphate)-DNA + a 5'-end 5'-phospho-2'-deoxyribonucleoside-DNA + H(+). Its function is as follows. Involved in base excision repair of DNA damaged by oxidation or by mutagenic agents. Acts as a DNA glycosylase that recognizes and removes damaged bases. Has a preference for oxidized purines, such as 7,8-dihydro-8-oxoguanine (8-oxoG). Has AP (apurinic/apyrimidinic) lyase activity and introduces nicks in the DNA strand. Cleaves the DNA backbone by beta-delta elimination to generate a single-strand break at the site of the removed base with both 3'- and 5'-phosphates. In Desulfitobacterium hafniense (strain DSM 10664 / DCB-2), this protein is Formamidopyrimidine-DNA glycosylase.